Reading from the N-terminus, the 215-residue chain is uncharacterized protein (215 aa).

The protein resides in the mitochondrion. This is an uncharacterized protein from Arabidopsis thaliana (Mouse-ear cress).